The following is a 321-amino-acid chain: Sex-lethal homolog (321 aa).

RRM domains lie at 78–156 and 164–244; these read TNLI…FARP and TNLY…VAEE.

Expressed in gonads and somatic tissues of both sexes. In the ovary, expressed in the last egg chamber of each ovariole. Highly expressed in nurse cells with low expression found in oocytes. Highly expressed in testis with lower expression in testis sheath and vas deferentia.

It is found in the nucleus. Its function is as follows. Unknown; apparently not involved in somatic sex determination. This is Sex-lethal homolog (SXL) from Megaselia scalaris (Humpbacked fly).